Reading from the N-terminus, the 184-residue chain is Ribosome-recycling factor (184 aa).

The protein belongs to the RRF family.

The protein localises to the cytoplasm. Responsible for the release of ribosomes from messenger RNA at the termination of protein biosynthesis. May increase the efficiency of translation by recycling ribosomes from one round of translation to another. The chain is Ribosome-recycling factor from Agathobacter rectalis (strain ATCC 33656 / DSM 3377 / JCM 17463 / KCTC 5835 / VPI 0990) (Eubacterium rectale).